A 204-amino-acid polypeptide reads, in one-letter code: Probable GTP-binding protein EngB (204 aa).

The EngB-type G domain occupies Ser27 to Pro201. Residues Gly35 to Ser42, Gly62 to Leu66, Asp80 to Gly83, Thr147 to Asp150, and Phe180 to Ala182 contribute to the GTP site. Ser42 and Thr64 together coordinate Mg(2+).

Belongs to the TRAFAC class TrmE-Era-EngA-EngB-Septin-like GTPase superfamily. EngB GTPase family. Mg(2+) is required as a cofactor.

Necessary for normal cell division and for the maintenance of normal septation. The sequence is that of Probable GTP-binding protein EngB from Histophilus somni (strain 129Pt) (Haemophilus somnus).